Consider the following 264-residue polypeptide: Small ribosomal subunit protein eS4 (264 aa).

The S4 RNA-binding domain occupies 42–104 (LPLVIIMRNR…TNENFRLLYD (63 aa)).

Belongs to the eukaryotic ribosomal protein eS4 family.

The protein resides in the cytoplasm. The polypeptide is Small ribosomal subunit protein eS4 (RPS4) (Solanum tuberosum (Potato)).